Reading from the N-terminus, the 356-residue chain is Cysteine protease XCP2 (356 aa).

The N-terminal stretch at 1–26 (MALSSPSRILCFALALSAASLSLSFA) is a signal peptide. The propeptide at 27-137 (SSHDYSIVGY…AEFAYRDVEA (111 aa)) is activation peptide. Cystine bridges form between C159–C201, C193–C234, and C292–C343. C162 is an active-site residue. Residue N181 is glycosylated (N-linked (GlcNAc...) asparagine). Active-site residues include H298 and N318.

It belongs to the peptidase C1 family. Interacts with PRN2. In terms of tissue distribution, mostly expressed in roots, stems and flowers. Confined to tracheary elements, and specifically to xylem.

Its subcellular location is the vacuole. It is found in the cell membrane. Cysteine protease involved in xylem tracheary element (TE) autolysis during xylogenesis in roots. Participates in micro autolysis within the intact central vacuole before mega autolysis is initiated by tonoplast implosion. Involved in susceptibility to the bacterial plant pathogen Ralstonia solanacearum. This chain is Cysteine protease XCP2, found in Arabidopsis thaliana (Mouse-ear cress).